Consider the following 303-residue polypeptide: Archaeosortase A (303 aa).

The next 7 helical transmembrane spans lie at 3–23 (GLLS…GAVA), 36–56 (TAAW…FTLV), 60–80 (YIEG…GWLL), 93–113 (AVAA…FTLL), 169–189 (VVLA…IAAV), 200–220 (LAIA…FIAI), and 259–279 (LAVV…PELL). The Acyl-thioester intermediate role is filled by C173. The active-site Proton donor is R214.

Belongs to the exosortase/archaeosortase family. Archaeosortase A subfamily.

It is found in the cell membrane. Transpeptidase that recognizes and modifies its substrate by proteolytic cleavage of a sorting signal. Following cleavage, a covalent intermediate is formed via a thioester bond between the archaeosortase and its substrate, which is then transferred and covalently attached to the cell membrane. This sortase recognizes a tripartite structure consisting of a conserved Pro-Gly-Phe (PGF) motif, followed by a transmembrane alpha helix domain and a cluster of basic residues, usually at the C-terminus of target proteins. Confirmed substrates include the cell surface S-layer glycoprotein Csg and HVO_0405. ArtA is required for the C-terminal processing of Csg and for its lipidation and attachment to the archaeal plasma membrane. It is also required for the processing of HVO_0405, which contains an atypical central tripartite structure. This chain is Archaeosortase A, found in Haloferax volcanii (strain ATCC 29605 / DSM 3757 / JCM 8879 / NBRC 14742 / NCIMB 2012 / VKM B-1768 / DS2) (Halobacterium volcanii).